The following is a 322-amino-acid chain: FAD-dependent monooxygenase subE (322 aa).

E35, G49, R108, and D313 together coordinate FAD.

This sequence belongs to the paxM FAD-dependent monooxygenase family. FAD serves as cofactor.

The protein operates within secondary metabolite biosynthesis; terpenoid biosynthesis. Functionally, FAD-dependent monooxygenase; part of the gene cluster that mediates the biosynthesis of the immunosuppressants subglutinols, meroterpenoids consisting of an alpha-pyrone (4-hydroxy-5,6-dimethyl-2-pyrone) moiety attached to a decalin core fused to a five-membered cyclic ether carrying a prenylside chain. The first step of the pathway is the synthesis of the alpha-pyrone moiety by the polyketide synthase subA via condensation of one acetyl-CoA starter unit with 3 malonyl-CoA units and 2 methylations. The alpha-pyrone is then combined with geranylgeranyl pyrophosphate (GGPP) formed by the GGPP synthase subD through the action of the prenyltransferase subC to yield a linear alpha-pyrone diterpenoid. Subsequent steps in the subglutinol biosynthetic pathway involve the decalin core formation, which is thought to be initiated by the epoxidation of the C10-C11 olefin by the FAD-dependent oxidoreductase subE. The following cyclization cascade would be catalyzed by the terpene cyclase subB. Lastly, the FAD-dependent dehydrogenase subF probably catalyzes the five-membered cyclic ether formation to complete the formation of subglutinol A. Subsequent redox reactions appear to give rise to subglutinol C and D, however, it remains unclear which enzymes are responsible for these transformations. SubD may have secondary function in the conversion of the identified subglutinols to subglutinol analog 45, which seems to be the major product of the cluster. This chain is FAD-dependent monooxygenase subE, found in Metarhizium robertsii (strain ARSEF 23 / ATCC MYA-3075) (Metarhizium anisopliae (strain ARSEF 23)).